A 209-amino-acid chain; its full sequence is uncharacterized protein (209 aa).

4 helical membrane-spanning segments follow: residues 21–41, 81–101, 107–127, and 159–179; these read LAYLNVLWILFSLAGLVVFGL, ILGLIVVTAALFLFADMRIAA, VLVNVFVSISLIFAFVVLYVF, and AAGAVGVLCLVLFHVTFLLFF.

It is found in the cell membrane. This is an uncharacterized protein from Bacillus subtilis (strain 168).